Consider the following 550-residue polypeptide: Hydroxylamine reductase (550 aa).

The [4Fe-4S] cluster site is built by Cys-7, Cys-10, Cys-19, and Cys-25. Residues His-244, Glu-268, Cys-312, Cys-405, Cys-433, Cys-458, Glu-493, and Lys-495 each contribute to the hybrid [4Fe-2O-2S] cluster site. Cys-405 is subject to Cysteine persulfide.

This sequence belongs to the HCP family. It depends on [4Fe-4S] cluster as a cofactor. Requires hybrid [4Fe-2O-2S] cluster as cofactor.

It localises to the cytoplasm. The catalysed reaction is A + NH4(+) + H2O = hydroxylamine + AH2 + H(+). Functionally, catalyzes the reduction of hydroxylamine to form NH(3) and H(2)O. This Porphyromonas gingivalis (strain ATCC BAA-308 / W83) protein is Hydroxylamine reductase.